We begin with the raw amino-acid sequence, 111 residues long: Phosphoribosyl-ATP pyrophosphatase (111 aa).

The protein belongs to the PRA-PH family.

It localises to the cytoplasm. The catalysed reaction is 1-(5-phospho-beta-D-ribosyl)-ATP + H2O = 1-(5-phospho-beta-D-ribosyl)-5'-AMP + diphosphate + H(+). The protein operates within amino-acid biosynthesis; L-histidine biosynthesis; L-histidine from 5-phospho-alpha-D-ribose 1-diphosphate: step 2/9. In Pseudomonas putida (strain W619), this protein is Phosphoribosyl-ATP pyrophosphatase.